The following is a 122-amino-acid chain: Protein FAM223A (122 aa).

The protein belongs to the FAM223 family.

This is Protein FAM223A (FAM223A) from Homo sapiens (Human).